The chain runs to 229 residues: Triosephosphate isomerase (229 aa).

A substrate-binding site is contributed by 9–11 (NYK). Histidine 93 serves as the catalytic Electrophile. Glutamate 141 functions as the Proton acceptor in the catalytic mechanism. Residues isoleucine 146, glycine 180, and 201 to 202 (AS) each bind substrate.

The protein belongs to the triosephosphate isomerase family. In terms of assembly, homotetramer; dimer of dimers.

It localises to the cytoplasm. The enzyme catalyses D-glyceraldehyde 3-phosphate = dihydroxyacetone phosphate. It participates in carbohydrate biosynthesis; gluconeogenesis. It functions in the pathway carbohydrate degradation; glycolysis; D-glyceraldehyde 3-phosphate from glycerone phosphate: step 1/1. Functionally, involved in the gluconeogenesis. Catalyzes stereospecifically the conversion of dihydroxyacetone phosphate (DHAP) to D-glyceraldehyde-3-phosphate (G3P). This Sulfurisphaera tokodaii (strain DSM 16993 / JCM 10545 / NBRC 100140 / 7) (Sulfolobus tokodaii) protein is Triosephosphate isomerase.